The sequence spans 635 residues: 1-deoxy-D-xylulose-5-phosphate synthase (635 aa).

Thiamine diphosphate-binding positions include His-79 and Gly-120–Ser-122. Asp-151 serves as a coordination point for Mg(2+). Thiamine diphosphate is bound by residues Gly-152 to Ala-153, Asn-182, Tyr-290, and Glu-372. Asn-182 is a Mg(2+) binding site.

It belongs to the transketolase family. DXPS subfamily. As to quaternary structure, homodimer. It depends on Mg(2+) as a cofactor. Requires thiamine diphosphate as cofactor.

It carries out the reaction D-glyceraldehyde 3-phosphate + pyruvate + H(+) = 1-deoxy-D-xylulose 5-phosphate + CO2. It participates in metabolic intermediate biosynthesis; 1-deoxy-D-xylulose 5-phosphate biosynthesis; 1-deoxy-D-xylulose 5-phosphate from D-glyceraldehyde 3-phosphate and pyruvate: step 1/1. In terms of biological role, catalyzes the acyloin condensation reaction between C atoms 2 and 3 of pyruvate and glyceraldehyde 3-phosphate to yield 1-deoxy-D-xylulose-5-phosphate (DXP). The sequence is that of 1-deoxy-D-xylulose-5-phosphate synthase from Stenotrophomonas maltophilia (strain K279a).